Reading from the N-terminus, the 344-residue chain is MTAILERRETTSLWARFCEWVTSTENRLYIGWFGCLMIPTLLTATSVFIIAFIAAPPVDIDGIREPVSGSLLYGNNIISGAVVPTSNAIGLHFYPIWEAASLDEWLYNGGPYQLIVCHFFLGICAYMGREWELSFRLGMRPWIAVAYSAPVAAATAVFIIYPIGQGSFSDGMPLGISGTFNFMIVFQAEHNILMHPFHMLGVAGVFGGSLFSAMHGSLVTSSLIRETTENQSANAGYRFGQEEETYNIVAAHGYFGRLIFQYASFNNSRSLHFFLAAWPVIGIWFTALGISTMAFNLNGFNFNQSVLDSQGRVLNTWADIINRANLGMEVMHERNAHNFPLDLA.

Thr2 is subject to N-acetylthreonine. Phosphothreonine is present on Thr2. Helical transmembrane passes span 29–46 (YIGW…TATS), 118–133 (HFFL…EWEL), and 142–156 (WIAV…AATA). His118 serves as a coordination point for chlorophyll a. Tyr126 provides a ligand contact to pheophytin a. [CaMn4O5] cluster is bound by residues Asp170 and Glu189. Residues 197–218 (FHMLGVAGVFGGSLFSAMHGSL) form a helical membrane-spanning segment. His198 serves as a coordination point for chlorophyll a. Residues His215 and 264 to 265 (SF) contribute to the a quinone site. His215 provides a ligand contact to Fe cation. His272 contacts Fe cation. A helical transmembrane segment spans residues 274–288 (FLAAWPVIGIWFTAL). The [CaMn4O5] cluster site is built by His332, Glu333, Asp342, and Ala344.

This sequence belongs to the reaction center PufL/M/PsbA/D family. PSII is composed of 1 copy each of membrane proteins PsbA, PsbB, PsbC, PsbD, PsbE, PsbF, PsbH, PsbI, PsbJ, PsbK, PsbL, PsbM, PsbT, PsbX, PsbY, PsbZ, Psb30/Ycf12, at least 3 peripheral proteins of the oxygen-evolving complex and a large number of cofactors. It forms dimeric complexes. It depends on The D1/D2 heterodimer binds P680, chlorophylls that are the primary electron donor of PSII, and subsequent electron acceptors. It shares a non-heme iron and each subunit binds pheophytin, quinone, additional chlorophylls, carotenoids and lipids. D1 provides most of the ligands for the Mn4-Ca-O5 cluster of the oxygen-evolving complex (OEC). There is also a Cl(-1) ion associated with D1 and D2, which is required for oxygen evolution. The PSII complex binds additional chlorophylls, carotenoids and specific lipids. as a cofactor. In terms of processing, tyr-161 forms a radical intermediate that is referred to as redox-active TyrZ, YZ or Y-Z.

It is found in the plastid. It localises to the chloroplast thylakoid membrane. The enzyme catalyses 2 a plastoquinone + 4 hnu + 2 H2O = 2 a plastoquinol + O2. Photosystem II (PSII) is a light-driven water:plastoquinone oxidoreductase that uses light energy to abstract electrons from H(2)O, generating O(2) and a proton gradient subsequently used for ATP formation. It consists of a core antenna complex that captures photons, and an electron transfer chain that converts photonic excitation into a charge separation. The D1/D2 (PsbA/PsbD) reaction center heterodimer binds P680, the primary electron donor of PSII as well as several subsequent electron acceptors. This is Photosystem II protein D1 from Pleurastrum terricola (Filamentous green alga).